The chain runs to 485 residues: Ribulose bisphosphate carboxylase large chain (485 aa).

Asparagine 124 and threonine 174 together coordinate substrate. Residue lysine 176 is the Proton acceptor of the active site. Position 178 (lysine 178) interacts with substrate. Residues lysine 202, aspartate 204, and glutamate 205 each contribute to the Mg(2+) site. The residue at position 202 (lysine 202) is an N6-carboxylysine. Histidine 294 serves as the catalytic Proton acceptor. The substrate site is built by arginine 295, histidine 327, and serine 379.

Belongs to the RuBisCO large chain family. Type I subfamily. As to quaternary structure, heterohexadecamer of 8 large chains and 8 small chains. The cofactor is Mg(2+).

It carries out the reaction 2 (2R)-3-phosphoglycerate + 2 H(+) = D-ribulose 1,5-bisphosphate + CO2 + H2O. The enzyme catalyses D-ribulose 1,5-bisphosphate + O2 = 2-phosphoglycolate + (2R)-3-phosphoglycerate + 2 H(+). Functionally, ruBisCO catalyzes two reactions: the carboxylation of D-ribulose 1,5-bisphosphate, the primary event in carbon dioxide fixation, as well as the oxidative fragmentation of the pentose substrate in the photorespiration process. Both reactions occur simultaneously and in competition at the same active site. The chain is Ribulose bisphosphate carboxylase large chain from Rhodopseudomonas palustris (strain BisB18).